The primary structure comprises 65 residues: Large ribosomal subunit protein uL29 (65 aa).

Belongs to the universal ribosomal protein uL29 family.

The sequence is that of Large ribosomal subunit protein uL29 (rpmC) from Borreliella burgdorferi (strain ATCC 35210 / DSM 4680 / CIP 102532 / B31) (Borrelia burgdorferi).